Consider the following 332-residue polypeptide: Putative peptide import ATP-binding protein BMEII0206 (332 aa).

Residues 11–261 (LEVSNLSVDF…PLHPYTEGLL (251 aa)) form the ABC transporter domain. 47–54 (GESGSGKS) provides a ligand contact to ATP.

The protein belongs to the ABC transporter superfamily. As to quaternary structure, the complex is composed of two ATP-binding proteins (BMEII0205 and BMEII0206), two transmembrane proteins (BMEII0207/BMEII0208 and BMEII0209) and a solute-binding protein (BMEII0210).

It localises to the cell inner membrane. Functionally, probably part of an ABC transporter complex that could be involved in peptide import. Probably responsible for energy coupling to the transport system. In Brucella melitensis biotype 1 (strain ATCC 23456 / CCUG 17765 / NCTC 10094 / 16M), this protein is Putative peptide import ATP-binding protein BMEII0206.